A 59-amino-acid polypeptide reads, in one-letter code: Insertion element IS986 uncharacterized 6.6 kDa protein (59 aa).

Positions 1-26 (MRKWVRQAQVDAGARPGTTTEESAEI) are disordered.

It belongs to the transposase 8 family.

The protein is Insertion element IS986 uncharacterized 6.6 kDa protein of Mycobacterium tuberculosis.